We begin with the raw amino-acid sequence, 454 residues long: Sensor histidine kinase YkoH (454 aa).

Over 1–12 the chain is Cytoplasmic; it reads MKLKTKIHLYTS. A helical transmembrane segment spans residues 13 to 33; sequence ISLLILLILVHTAVYLIFSSA. Residues 34-153 are Extracellular-facing; that stretch reads LTSKDAARLA…NTEESLFLLK (120 aa). Residues 154–174 traverse the membrane as a helical segment; the sequence is IILIAASAAVCIASFFAGSLL. Residues 175–454 lie on the Cytoplasmic side of the membrane; that stretch reads ARRIINPIRR…QFSEQNGGGR (280 aa). An HAMP domain is found at 176–230; sequence RRIINPIRRLMITMKDIQRDKEFKTISLEGQSNDELYQMGLTFNEMAMMLKEHYD. The Histidine kinase domain occupies 238–450; that stretch reads DASHELKTPL…AVTMQFSEQN (213 aa). His-241 carries the phosphohistidine; by autocatalysis modification.

Its subcellular location is the cell membrane. It catalyses the reaction ATP + protein L-histidine = ADP + protein N-phospho-L-histidine.. In terms of biological role, probable member of the two-component regulatory system YkoH/YkoG. Potentially phosphorylates YkoG. The polypeptide is Sensor histidine kinase YkoH (ykoH) (Bacillus subtilis (strain 168)).